Reading from the N-terminus, the 188-residue chain is Protein SSX5 (188 aa).

The KRAB-related domain maps to 20–83; it reads KMQKAFDDIA…KRVADFQGND (64 aa). The segment at 78–188 is disordered; the sequence is DFQGNDFDND…EISDPQEDDE (111 aa). Positions 112 to 122 are enriched in basic and acidic residues; sequence TPEKPAEEGND. A compositionally biased stretch (polar residues) spans 144–155; it reads KLNTSEKVNKTS. Residues 156–170 show a composition bias toward basic residues; sequence GPKRGKHAWTHRVRE. Positions 179–188 are enriched in acidic residues; that stretch reads EISDPQEDDE.

This sequence belongs to the SSX family.

Could act as a modulator of transcription. The sequence is that of Protein SSX5 (SSX5) from Homo sapiens (Human).